Here is a 946-residue protein sequence, read N- to C-terminus: Protein translocase subunit SecA (946 aa).

ATP-binding positions include Q87, 105-109 (GEGKT), and D524. 2 disordered regions span residues 872-892 (PEQP…NTGE) and 904-946 (PADT…GRYA). The span at 907–917 (TVEKSERDPNR) shows a compositional bias: basic and acidic residues. Residues C930, C932, C941, and H942 each coordinate Zn(2+). The segment covering 936–946 (KKYKHCHGRYA) has biased composition (basic residues).

This sequence belongs to the SecA family. Monomer and homodimer. Part of the essential Sec protein translocation apparatus which comprises SecA, SecYEG and auxiliary proteins SecDF-YajC and YidC. Requires Zn(2+) as cofactor.

It localises to the cell inner membrane. The protein localises to the cytoplasm. It catalyses the reaction ATP + H2O + cellular proteinSide 1 = ADP + phosphate + cellular proteinSide 2.. Functionally, part of the Sec protein translocase complex. Interacts with the SecYEG preprotein conducting channel. Has a central role in coupling the hydrolysis of ATP to the transfer of proteins into and across the cell membrane, serving both as a receptor for the preprotein-SecB complex and as an ATP-driven molecular motor driving the stepwise translocation of polypeptide chains across the membrane. The chain is Protein translocase subunit SecA from Rhodopseudomonas palustris (strain BisB5).